The primary structure comprises 428 residues: Histidinol dehydrogenase (428 aa).

Residues tyrosine 127, glutamine 185, and asparagine 208 each contribute to the NAD(+) site. Residues serine 232, glutamine 254, and histidine 257 each coordinate substrate. Zn(2+) is bound by residues glutamine 254 and histidine 257. Catalysis depends on proton acceptor residues glutamate 321 and histidine 322. Positions 322, 355, 409, and 414 each coordinate substrate. Residue aspartate 355 coordinates Zn(2+). Residue histidine 414 participates in Zn(2+) binding.

It belongs to the histidinol dehydrogenase family. The cofactor is Zn(2+).

It catalyses the reaction L-histidinol + 2 NAD(+) + H2O = L-histidine + 2 NADH + 3 H(+). It participates in amino-acid biosynthesis; L-histidine biosynthesis; L-histidine from 5-phospho-alpha-D-ribose 1-diphosphate: step 9/9. Its function is as follows. Catalyzes the sequential NAD-dependent oxidations of L-histidinol to L-histidinaldehyde and then to L-histidine. In Pasteurella multocida (strain Pm70), this protein is Histidinol dehydrogenase.